Here is an 81-residue protein sequence, read N- to C-terminus: EC protein III (81 aa).

It belongs to the metallothionein superfamily. Type 15 family.

Its function is as follows. Binds 5 molecules of zinc. May have a role in Zn(2+) homeostasis during embryogenesis. The chain is EC protein III from Triticum aestivum (Wheat).